The primary structure comprises 325 residues: Protein translocase subunit SecF (325 aa).

Helical transmembrane passes span 36–56, 148–168, 175–197, 202–224, 254–274, and 281–301; these read GYIL…TKGF, LAQG…IYVG, LGFG…FSAL, DLTF…IVVF, TIIT…FGGP, and LALL…AIAI.

Belongs to the SecD/SecF family. SecF subfamily. In terms of assembly, forms a complex with SecD. Part of the essential Sec protein translocation apparatus which comprises SecA, SecYEG and auxiliary proteins SecDF-YajC and YidC.

The protein localises to the cell inner membrane. Its function is as follows. Part of the Sec protein translocase complex. Interacts with the SecYEG preprotein conducting channel. SecDF uses the proton motive force (PMF) to complete protein translocation after the ATP-dependent function of SecA. This Haemophilus influenzae (strain ATCC 51907 / DSM 11121 / KW20 / Rd) protein is Protein translocase subunit SecF.